Here is a 1411-residue protein sequence, read N- to C-terminus: Zinc finger protein 609 (1411 aa).

Disordered stretches follow at residues 1–26 (MSLSSGASGGKGVDANPVETYDSGDE), 47–190 (QKLE…QPVP), 353–484 (PRFC…EPTV), 517–659 (AHAH…ARPI), 679–963 (ASPG…VIQQ), 1005–1125 (YEEQ…RQAE), 1153–1221 (KSED…LTQH), and 1270–1367 (GSKV…STHH). A phosphoserine mark is found at Ser-358, Ser-361, and Ser-379. Residues 377 to 401 (PNSNTPVNETATASDSKGTSNSSKT) are compositionally biased toward polar residues. At Thr-381 the chain carries Phosphothreonine. Ser-413, Ser-433, Ser-446, Ser-452, Ser-467, and Ser-470 each carry phosphoserine. The segment covering 423–437 (ASSTSEDVKASPSSA) has biased composition (polar residues). Lys-479 participates in a covalent cross-link: Glycyl lysine isopeptide (Lys-Gly) (interchain with G-Cter in SUMO2). The C2H2-type zinc-finger motif lies at 495-520 (IDCPHPNCNKKYKHINGLKYHQAHAH). Basic and acidic residues predominate over residues 519-529 (AHTDDDSKPEA). The residue at position 533 (Ser-533) is a Phosphoserine. The span at 549-563 (NGASVSQKGSLSPAR) shows a compositional bias: polar residues. Phosphoserine occurs at positions 576 and 578. Basic and acidic residues predominate over residues 626-649 (SLERKCMEKEKCKKPSSLKPEKIP). A compositionally biased stretch (polar residues) spans 679-700 (ASPGSSSGLTATVAQAMPNSPQ). Basic residues predominate over residues 726–736 (DKKKKDKKKKE). Phosphoserine is present on Ser-743. At Thr-746 the chain carries Phosphothreonine. Basic and acidic residues predominate over residues 751–764 (CRAEEGKSPFRESS). A Phosphoserine modification is found at Ser-758. A Glycyl lysine isopeptide (Lys-Gly) (interchain with G-Cter in SUMO2) cross-link involves residue Lys-789. Over residues 798-844 (FTDNAPSPSIGGSSRLENTTPTQPLTPLHVVTQNGAEASSVKTNSPA) the composition is skewed to polar residues. Ser-804 carries the post-translational modification Phosphoserine. Thr-823 bears the Phosphothreonine mark. 3 positions are modified to phosphoserine: Ser-842, Ser-846, and Ser-849. Residues 855–876 (GEGKVDSVKSKDAEQLVKEGAK) are compositionally biased toward basic and acidic residues. Over residues 897–908 (SYYSPSYAQSSP) the composition is skewed to low complexity. Positions 926–950 (TKRDEEPESIEGKVKNDICEEKKPE) are enriched in basic and acidic residues. A compositionally biased stretch (low complexity) spans 952–963 (SSSSQQPSVIQQ). A compositionally biased stretch (basic and acidic residues) spans 1020-1042 (GVDKKAEMGLKEREAALKEEWKQ). Ser-1055 carries the phosphoserine modification. A Glycyl lysine isopeptide (Lys-Gly) (interchain with G-Cter in SUMO2) cross-link involves residue Lys-1061. 3 stretches are compositionally biased toward basic and acidic residues: residues 1097-1113 (LKVKLSDASHLSKEASE), 1153-1187 (KSEDERWKEERDRKLKEERSRSKDSVPKEDGKEST), and 1195-1208 (TSEESRLGSKEPRP). Residue Lys-1153 forms a Glycyl lysine isopeptide (Lys-Gly) (interchain with G-Cter in SUMO2) linkage. The segment covering 1286–1296 (PSVTCKSSSES) has biased composition (polar residues). Residue Lys-1297 forms a Glycyl lysine isopeptide (Lys-Gly) (interchain with G-Cter in SUMO2) linkage. Gly residues predominate over residues 1328–1337 (GCGVVGGGGS).

In terms of assembly, interacts (via N-terminus) with NIPBL. Interacts with INTS13; promoting association with the integrator complex. As to expression, isoform 1: Expressed in myoblasts and myotubes. Isoform 2: Expressed in myoblasts and myotubes, with a preference in undifferentiated myoblasts.

It is found in the nucleus. Transcription factor, which activates RAG1, and possibly RAG2, transcription. Through the regulation of RAG1/2 expression, may regulate thymocyte maturation. Along with NIPBL and the multiprotein complex Integrator, promotes cortical neuron migration during brain development by regulating the transcription of crucial genes in this process. Preferentially binds promoters containing paused RNA polymerase II. Up-regulates the expression of SEMA3A, NRP1, PLXND1 and GABBR2 genes, among others. Functionally, involved in the regulation of myoblast proliferation during myogenesis. The chain is Zinc finger protein 609 from Homo sapiens (Human).